A 36-amino-acid chain; its full sequence is Photosystem I reaction center subunit VIII (36 aa).

A helical membrane pass occupies residues 9-29 (ILVPLVGLIFPALSMALLFIY).

Belongs to the PsaI family.

The protein localises to the plastid. Its subcellular location is the chloroplast thylakoid membrane. Functionally, may help in the organization of the PsaL subunit. This chain is Photosystem I reaction center subunit VIII, found in Pyropia yezoensis (Susabi-nori).